A 409-amino-acid chain; its full sequence is Sperm equatorial segment protein 1 (409 aa).

The N-terminal stretch at 1-18 (MKPVVLVALLWLWPSSFL) is a signal peptide. N132 carries N-linked (GlcNAc...) asparagine glycosylation. The tract at residues 141 to 223 (EPYIEKEPEP…TTNTQGTPNT (83 aa)) is disordered. Positions 167 to 177 (PEPEPESESAP) are enriched in acidic residues. A compositionally biased stretch (polar residues) spans 198 to 208 (NKVRTGTSRMS). The span at 209-223 (TVITQTTNTQGTPNT) shows a compositional bias: low complexity.

It belongs to the SPESP1 family. Post-translationally, glycosylated. In testis there are two predominant forms of 77- and 67-kDa and a form of 47-kDa, whereas in epididymal sperm from caput, corpus, and cauda there are two forms of 47- and 43-kDa. Testis forms contain complex carbohydrate residues. Epididymal sperm forms are N-glycosylated. Then undergoes significant glycosylation in the testis and that the majority of these glycoconjugates are removed by the time sperm reach the caput epididymis.

The protein resides in the cytoplasmic vesicle. Its subcellular location is the secretory vesicle. It is found in the acrosome. In terms of biological role, involved in fertilization ability of sperm. The polypeptide is Sperm equatorial segment protein 1 (Rattus norvegicus (Rat)).